The sequence spans 223 residues: Type III pantothenate kinase (223 aa).

Position 17 to 24 (17 to 24) interacts with ATP; that stretch reads DIGNTRIH. Substrate-binding positions include Y81 and 85 to 88; that span reads GIDR. D87 functions as the Proton acceptor in the catalytic mechanism. D102 provides a ligand contact to K(+). An ATP-binding site is contributed by S105. Residue T157 participates in substrate binding.

It belongs to the type III pantothenate kinase family. As to quaternary structure, homodimer. NH4(+) serves as cofactor. The cofactor is K(+).

Its subcellular location is the cytoplasm. It catalyses the reaction (R)-pantothenate + ATP = (R)-4'-phosphopantothenate + ADP + H(+). It functions in the pathway cofactor biosynthesis; coenzyme A biosynthesis; CoA from (R)-pantothenate: step 1/5. In terms of biological role, catalyzes the phosphorylation of pantothenate (Pan), the first step in CoA biosynthesis. This chain is Type III pantothenate kinase, found in Helicobacter pylori (strain J99 / ATCC 700824) (Campylobacter pylori J99).